The chain runs to 146 residues: Hemoglobin subunit beta (146 aa).

V1 carries the post-translational modification N-acetylvaline. Residues 2–146 (ELTAEEKAAV…VANALAHKYH (145 aa)) form the Globin domain. S44 carries the post-translational modification Phosphoserine. K59 carries the N6-acetyllysine modification. H63 contacts heme b. The residue at position 82 (K82) is an N6-acetyllysine. H92 contacts heme b. C93 carries the post-translational modification S-nitrosocysteine. K144 is modified (N6-acetyllysine).

It belongs to the globin family. As to quaternary structure, heterotetramer of two alpha chains and two beta chains. In terms of tissue distribution, red blood cells.

Functionally, involved in oxygen transport from the lung to the various peripheral tissues. This is Hemoglobin subunit beta (HBB) from Ceratotherium simum (White rhinoceros).